Here is a 181-residue protein sequence, read N- to C-terminus: Protein Syd (181 aa).

Belongs to the Syd family.

It is found in the cell inner membrane. Interacts with the SecY protein in vivo. May bind preferentially to an uncomplexed state of SecY, thus functioning either as a chelating agent for excess SecY in the cell or as a regulatory factor that negatively controls the translocase function. The protein is Protein Syd of Citrobacter koseri (strain ATCC BAA-895 / CDC 4225-83 / SGSC4696).